Reading from the N-terminus, the 394-residue chain is Elongation factor Tu (394 aa).

The 195-residue stretch at lysine 10 to valine 204 folds into the tr-type G domain. The segment at glycine 19–threonine 26 is G1. Position 19 to 26 (glycine 19 to threonine 26) interacts with GTP. Residue threonine 26 participates in Mg(2+) binding. The G2 stretch occupies residues glycine 60 to serine 64. Residues aspartate 81 to glycine 84 are G3. Residues aspartate 81–histidine 85 and asparagine 136–aspartate 139 contribute to the GTP site. The tract at residues asparagine 136–aspartate 139 is G4. A G5 region spans residues serine 174–leucine 176.

The protein belongs to the TRAFAC class translation factor GTPase superfamily. Classic translation factor GTPase family. EF-Tu/EF-1A subfamily. As to quaternary structure, monomer.

It is found in the cytoplasm. The catalysed reaction is GTP + H2O = GDP + phosphate + H(+). GTP hydrolase that promotes the GTP-dependent binding of aminoacyl-tRNA to the A-site of ribosomes during protein biosynthesis. This chain is Elongation factor Tu, found in Rickettsia montanensis.